An 84-amino-acid chain; its full sequence is Minor capsid protein P30 (84 aa).

Dimer.

It localises to the virion. Minor capsid protein essential for stable capsid assembly of complete particles. The polypeptide is Minor capsid protein P30 (XXX) (Enterobacteria phage PRD1 (Bacteriophage PRD1)).